The sequence spans 89 residues: MLYMKGTPKMPQCGFSARAVQCIEACGVDFAYVDILANPDIRQVLPQFSDWPTFPQLYVKGELIGGSDIIAEMFQQGELEPMLRDAVAA.

One can recognise a Glutaredoxin domain in the interval 1-89; it reads MLYMKGTPKM…EPMLRDAVAA (89 aa). Lysine 5 serves as a coordination point for glutathione. [2Fe-2S] cluster is bound at residue cysteine 13. Glutathione-binding positions include arginine 42, phenylalanine 54, and 67-68; that span reads SD.

The protein belongs to the glutaredoxin family. Monothiol subfamily.

In Legionella pneumophila subsp. pneumophila (strain Philadelphia 1 / ATCC 33152 / DSM 7513), this protein is Probable monothiol glutaredoxin GrlA (grlA).